A 311-amino-acid polypeptide reads, in one-letter code: UDP-N-acetylenolpyruvoylglucosamine reductase (311 aa).

The 165-residue stretch at Met-34–Gly-198 folds into the FAD-binding PCMH-type domain. Arg-177 is a catalytic residue. Catalysis depends on Ser-227, which acts as the Proton donor. Glu-297 is a catalytic residue.

The protein belongs to the MurB family. FAD serves as cofactor.

Its subcellular location is the cytoplasm. The enzyme catalyses UDP-N-acetyl-alpha-D-muramate + NADP(+) = UDP-N-acetyl-3-O-(1-carboxyvinyl)-alpha-D-glucosamine + NADPH + H(+). Its pathway is cell wall biogenesis; peptidoglycan biosynthesis. Functionally, cell wall formation. The protein is UDP-N-acetylenolpyruvoylglucosamine reductase of Shouchella clausii (strain KSM-K16) (Alkalihalobacillus clausii).